A 124-amino-acid polypeptide reads, in one-letter code: Large ribosomal subunit protein eL22 (124 aa).

Belongs to the eukaryotic ribosomal protein eL22 family. In terms of assembly, component of the large ribosomal subunit. Mature ribosomes consist of a small (40S) and a large (60S) subunit. The 40S subunit contains about 32 different proteins and 1 molecule of RNA (18S). The 60S subunit contains 45 different proteins and 3 molecules of RNA (25S, 5.8S and 5S).

The protein resides in the cytoplasm. In terms of biological role, component of the ribosome, a large ribonucleoprotein complex responsible for the synthesis of proteins in the cell. The small ribosomal subunit (SSU) binds messenger RNAs (mRNAs) and translates the encoded message by selecting cognate aminoacyl-transfer RNA (tRNA) molecules. The large subunit (LSU) contains the ribosomal catalytic site termed the peptidyl transferase center (PTC), which catalyzes the formation of peptide bonds, thereby polymerizing the amino acids delivered by tRNAs into a polypeptide chain. The nascent polypeptides leave the ribosome through a tunnel in the LSU and interact with protein factors that function in enzymatic processing, targeting, and the membrane insertion of nascent chains at the exit of the ribosomal tunnel. The polypeptide is Large ribosomal subunit protein eL22 (Candida albicans (strain SC5314 / ATCC MYA-2876) (Yeast)).